Reading from the N-terminus, the 1300-residue chain is Serine protease EspP (1300 aa).

Residues 1–55 (MNKIYSLKYSHITGGLIAVSELSGRVSSRATGKKKHKRILALCFLGLLQSSYSFA) form the signal peptide. Residues 57-311 (QMDISNFYIR…NQTTIDNLKN (255 aa)) enclose the Peptidase S6 domain. Residues His127, Asp156, and Ser263 each act as charge relay system in the active site. In terms of domain architecture, Autotransporter spans 1034 to 1300 (DINGEAGAWA…AVNANFRYSF (267 aa)).

Post-translationally, cleaved to release the mature protein from the outer membrane.

It localises to the periplasm. The protein localises to the secreted. Its subcellular location is the cell surface. It is found in the cell outer membrane. With respect to regulation, inhibition of cytotoxic activity by phenylmethylsulfonyl fluoride. Functionally, serine protease capable of cleaving pepsin A and human coagulation factor V, which may contribute to the mucosal hemorrhage observed in hemorrhagic colitis. The sequence is that of Serine protease EspP (espP) from Escherichia coli O157:H7.